The chain runs to 205 residues: Holliday junction branch migration complex subunit RuvA (205 aa).

Residues 1-64 (MIGKLKGIID…EDQIKLFGFR (64 aa)) are domain I. The segment at 65–143 (TDTEREWFRL…ALSAVDPAVV (79 aa)) is domain II. Residues 144–154 (KLSGAIDDNRA) form a flexible linker region. A domain III region spans residues 154 to 205 (APRAVTDAISALVNLGYGQPQAAAAVATASRTAGEDAETAQLIKLGLKELSK).

Belongs to the RuvA family. As to quaternary structure, homotetramer. Forms an RuvA(8)-RuvB(12)-Holliday junction (HJ) complex. HJ DNA is sandwiched between 2 RuvA tetramers; dsDNA enters through RuvA and exits via RuvB. An RuvB hexamer assembles on each DNA strand where it exits the tetramer. Each RuvB hexamer is contacted by two RuvA subunits (via domain III) on 2 adjacent RuvB subunits; this complex drives branch migration. In the full resolvosome a probable DNA-RuvA(4)-RuvB(12)-RuvC(2) complex forms which resolves the HJ.

It localises to the cytoplasm. The RuvA-RuvB-RuvC complex processes Holliday junction (HJ) DNA during genetic recombination and DNA repair, while the RuvA-RuvB complex plays an important role in the rescue of blocked DNA replication forks via replication fork reversal (RFR). RuvA specifically binds to HJ cruciform DNA, conferring on it an open structure. The RuvB hexamer acts as an ATP-dependent pump, pulling dsDNA into and through the RuvAB complex. HJ branch migration allows RuvC to scan DNA until it finds its consensus sequence, where it cleaves and resolves the cruciform DNA. The sequence is that of Holliday junction branch migration complex subunit RuvA from Rhodopseudomonas palustris (strain TIE-1).